Consider the following 347-residue polypeptide: S-adenosylmethionine:tRNA ribosyltransferase-isomerase (347 aa).

The protein belongs to the QueA family. In terms of assembly, monomer.

The protein localises to the cytoplasm. The enzyme catalyses 7-aminomethyl-7-carbaguanosine(34) in tRNA + S-adenosyl-L-methionine = epoxyqueuosine(34) in tRNA + adenine + L-methionine + 2 H(+). It participates in tRNA modification; tRNA-queuosine biosynthesis. In terms of biological role, transfers and isomerizes the ribose moiety from AdoMet to the 7-aminomethyl group of 7-deazaguanine (preQ1-tRNA) to give epoxyqueuosine (oQ-tRNA). This Bordetella bronchiseptica (strain ATCC BAA-588 / NCTC 13252 / RB50) (Alcaligenes bronchisepticus) protein is S-adenosylmethionine:tRNA ribosyltransferase-isomerase.